A 190-amino-acid chain; its full sequence is Putative manganese efflux pump MntP (190 aa).

The next 6 membrane-spanning stretches (helical) occupy residues 6–26, 36–56, 61–81, 108–128, 138–158, and 169–189; these read IWLL…TSGI, FFIM…IGWF, FSHL…AFWG, LAIA…FVGI, IVII…IGVF, and LWGG…HLFL.

It belongs to the MntP (TC 9.B.29) family.

It localises to the cell inner membrane. In terms of biological role, probably functions as a manganese efflux pump. The polypeptide is Putative manganese efflux pump MntP (Phocaeicola vulgatus (strain ATCC 8482 / DSM 1447 / JCM 5826 / CCUG 4940 / NBRC 14291 / NCTC 11154) (Bacteroides vulgatus)).